Here is a 608-residue protein sequence, read N- to C-terminus: Pentatricopeptide repeat-containing protein 1, apicoplast (608 aa).

7 PPR repeats span residues 165-199 (TTLA…NIKP), 200-230 (DLVS…MIES), 236-270 (NYEI…PFVE), 336-370 (QYSE…GKYM), 372-402 (SIFV…LKND), 410-445 (NVNI…LLTP), and 446-480 (NNLS…KLLN).

This sequence belongs to the PPR family. P subfamily. In terms of assembly, homodimer.

The protein resides in the plastid. The protein localises to the apicoplast. Functionally, binds to apicoplast RNA transcripts, preferentially to the motif UUAU, and protects RNA transcripts from degradation by ribonuclease. In Plasmodium falciparum (isolate 3D7), this protein is Pentatricopeptide repeat-containing protein 1, apicoplast.